A 49-amino-acid chain; its full sequence is uncharacterized protein (49 aa).

This is an uncharacterized protein from Homo sapiens (Human).